Here is a 99-residue protein sequence, read N- to C-terminus: RING finger protein Z (99 aa).

The N-myristoyl glycine; by host moiety is linked to residue G2. The segment at 31–67 (CKSCWFENKGLVECNNHYLCLNCLTLLLSVSNRCPIC) adopts an RING-type; atypical zinc-finger fold. A disordered region spans residues 74-99 (KLRPSAAPTAPPTGAADSIRPPPYSP). A compositionally biased stretch (low complexity) spans 77 to 89 (PSAAPTAPPTGAA). A PTAP/PSAP motif motif is present at residues 81–84 (PTAP). A PPXY motif motif is present at residues 94–97 (PPPY).

Belongs to the arenaviridae Z protein family. In terms of assembly, interacts with protein NP; this interaction probably directs the encapsidated genome to budding sites. Interacts (via RING domain) with polymerase L; this interaction inhibits viral transcription and replication, Z partially blocks the product exit tunnel for the releasing nascent RNA product. Interacts with the glycoprotein complex; this interaction plays a role in virion budding. Interacts with host eIF4E; this interaction results in eIF4E reduced affinity for its substrate, the 5'-m7 G cap structure. Interacts (via late-budding domain) with host TSG101; this interaction is essential for budding and release of viral particles. Interacts with host RPLP0; this interaction may serve to load ribosome-like particles inside the virion. Interacts with host PML; this interaction induces PML bodies redistribution in the cytoplasm upon viral infection. Interacts with host TAX1BP1. In terms of processing, myristoylation is required for the role of RING finger protein Z in assembly and budding.

It localises to the virion. The protein localises to the host cytoplasm. The protein resides in the host perinuclear region. It is found in the host cell membrane. Functionally, plays a crucial role in virion assembly and budding. Expressed late in the virus life cycle, it acts as an inhibitor of viral transcription and RNA synthesis by interacting with the viral polymerase L. Presumably recruits the NP encapsidated genome to cellular membranes at budding sites via direct interaction with NP. Plays critical roles in the final steps of viral release by interacting with host TSG101, a member of the vacuolar protein-sorting pathway and using other cellular host proteins involved in vesicle formation pathway. The budding of the virus progeny occurs after association of protein Z with the viral glycoprotein complex SSP-GP1-GP2 at the cell periphery, step that requires myristoylation of protein Z. Also selectively represses protein production by associating with host eIF4E. In cell-based minigenome assay, has an inhibitory effect on the ribonucleoprotein machinery (vRNP), which is responsible for the replication and transcription of the viral genome. In Homo sapiens (Human), this protein is RING finger protein Z.